The chain runs to 138 residues: Hydrogenase maturation factor HypA (138 aa).

His2 contributes to the Ni(2+) binding site. Positions 73, 76, 110, and 113 each coordinate Zn(2+).

The protein belongs to the HypA/HybF family.

Its function is as follows. Involved in the maturation of [NiFe] hydrogenases. Required for nickel insertion into the metal center of the hydrogenase. The sequence is that of Hydrogenase maturation factor HypA from Thermococcus sibiricus (strain DSM 12597 / MM 739).